The primary structure comprises 105 residues: uncharacterized protein (105 aa).

3 helical membrane passes run 3-23, 41-61, and 63-83; these read ISPL…QALF, DLVN…ALVS, and AFPV…TFIY.

Its subcellular location is the cell membrane. This is an uncharacterized protein from Methanocaldococcus jannaschii (strain ATCC 43067 / DSM 2661 / JAL-1 / JCM 10045 / NBRC 100440) (Methanococcus jannaschii).